Consider the following 150-residue polypeptide: MEKRNPREWLCLNRTVRFGETDAAGVVHFVELFRWCHETWEESLEKFGIVLKEIFPSTQINTSQLDVALPVVHCEANYFQPLYVGDTINIELYPEKINESSFVLLFKFKKNGEQIGTTNIKHVSINPITREKCALSKQINLWLHESGLNF.

Aspartate 22 is an active-site residue.

It belongs to the 4-hydroxybenzoyl-CoA thioesterase family. DHNA-CoA hydrolase subfamily.

The enzyme catalyses 1,4-dihydroxy-2-naphthoyl-CoA + H2O = 1,4-dihydroxy-2-naphthoate + CoA + H(+). It participates in cofactor biosynthesis; phylloquinone biosynthesis. Its pathway is quinol/quinone metabolism; 1,4-dihydroxy-2-naphthoate biosynthesis; 1,4-dihydroxy-2-naphthoate from chorismate: step 7/7. Catalyzes the hydrolysis of 1,4-dihydroxy-2-naphthoyl-CoA (DHNA-CoA) to 1,4-dihydroxy-2-naphthoate (DHNA), a reaction involved in phylloquinone (vitamin K1) biosynthesis. The sequence is that of 1,4-dihydroxy-2-naphthoyl-CoA hydrolase from Prochlorococcus marinus (strain NATL1A).